The following is a 129-amino-acid chain: uncharacterized protein (129 aa).

Residues 1–20 (MIYPLFRICILGAFLLGSYA) form the signal peptide.

This is an uncharacterized protein from Saccharomyces cerevisiae (strain ATCC 204508 / S288c) (Baker's yeast).